Reading from the N-terminus, the 60-residue chain is Ribosome biogenesis protein Nop10 (60 aa).

The tract at residues 29–60 (CDGPTENSAPAPFSPEDPYGEYRRRVRRRASE) is disordered.

This sequence belongs to the NOP10 family.

Its function is as follows. Involved in ribosome biogenesis; more specifically in 18S rRNA pseudouridylation and in cleavage of pre-rRNA. In Halorubrum lacusprofundi (strain ATCC 49239 / DSM 5036 / JCM 8891 / ACAM 34), this protein is Ribosome biogenesis protein Nop10.